The following is a 141-amino-acid chain: Large ribosomal subunit protein uL11 (141 aa).

Belongs to the universal ribosomal protein uL11 family. Part of the ribosomal stalk of the 50S ribosomal subunit. Interacts with L10 and the large rRNA to form the base of the stalk. L10 forms an elongated spine to which L12 dimers bind in a sequential fashion forming a multimeric L10(L12)X complex. One or more lysine residues are methylated.

Its function is as follows. Forms part of the ribosomal stalk which helps the ribosome interact with GTP-bound translation factors. This Oceanobacillus iheyensis (strain DSM 14371 / CIP 107618 / JCM 11309 / KCTC 3954 / HTE831) protein is Large ribosomal subunit protein uL11.